Here is a 381-residue protein sequence, read N- to C-terminus: rRNA adenine N-6-methyltransferase (381 aa).

The span at 1–19 (MSSSDEQPRPRRRNQDRQH) shows a compositional bias: basic and acidic residues. Residues 1–42 (MSSSDEQPRPRRRNQDRQHPNQNRPVLGRTERDRNRRQFGQN) form a disordered region. S-adenosyl-L-methionine is bound by residues N42, L44, G69, E90, D115, and A131. Positions 282–381 (RLDQKNEPRG…PGRRGGPGQR (100 aa)) are disordered. Residues 301–358 (GGRDHGDRRTGGQDRGDRRTGGRDHRDRQASGHGDRRSSGRNRDDGRTGEREQGDQGG) are compositionally biased toward basic and acidic residues. Over residues 359–381 (RRGPSGGGRTGGRPGRRGGPGQR) the composition is skewed to gly residues.

Belongs to the class I-like SAM-binding methyltransferase superfamily. rRNA adenine N(6)-methyltransferase family.

The catalysed reaction is adenosine(2085) in 23S rRNA + 2 S-adenosyl-L-methionine = N(6)-dimethyladenosine(2085) in 23S rRNA + 2 S-adenosyl-L-homocysteine + 2 H(+). In terms of biological role, this protein produces a dimethylation of the adenine residue at position 2085 in 23S rRNA, resulting in reduced affinity between ribosomes and macrolide-lincosamide-streptogramin B antibiotics. The sequence is that of rRNA adenine N-6-methyltransferase (ermE) from Saccharopolyspora erythraea (strain ATCC 11635 / DSM 40517 / JCM 4748 / NBRC 13426 / NCIMB 8594 / NRRL 2338).